A 585-amino-acid chain; its full sequence is Protein FAM151A (585 aa).

The helical transmembrane segment at Trp-14–Ile-34 threads the bilayer.

Belongs to the menorin family.

It is found in the membrane. This Homo sapiens (Human) protein is Protein FAM151A (FAM151A).